The chain runs to 448 residues: ATP-dependent RNA helicase sub2 (448 aa).

Over residues 19–29 the composition is skewed to low complexity; it reads DAAATTAAPAA. Positions 19–43 are disordered; the sequence is DAAATTAAPAANGAQDKKGDLTVSG. The Q motif motif lies at 58–86; that stretch reads TGFRDFLLKGELLRAITDCGFEHPSEVQQ. Residues 89-271 form the Helicase ATP-binding domain; sequence IPTAILNVDV…KKFMRNPLEV (183 aa). 102–109 contacts ATP; that stretch reads AKSGLGKT. The short motif at 211–214 is the DECD box element; that stretch reads DECD. The Helicase C-terminal domain occupies 283–444; it reads GLQQYYIKLS…EYPEGGVDSS (162 aa).

This sequence belongs to the DEAD box helicase family. DECD subfamily.

It localises to the nucleus. It catalyses the reaction ATP + H2O = ADP + phosphate + H(+). ATP-binding RNA helicase involved in transcription elongation and required for the export of mRNA out of the nucleus. SUB2 also plays a role in pre-mRNA splicing and spliceosome assembly. May be involved in rDNA and telomeric silencing, and maintenance of genome integrity. The chain is ATP-dependent RNA helicase sub2 (sub2) from Aspergillus fumigatus (strain ATCC MYA-4609 / CBS 101355 / FGSC A1100 / Af293) (Neosartorya fumigata).